A 548-amino-acid polypeptide reads, in one-letter code: Palmitoyltransferase pfa3 (548 aa).

At 1–32 (MMATLATSPPTSPTWPKRRPRAWALRCERYCC) the chain is on the cytoplasmic side. Residues 33–53 (AAATYFPLAFVYSLTTWAVYV) form a helical membrane-spanning segment. Over 54-70 (EASIGLKPSRSPWIGLP) the chain is Extracellular. A helical membrane pass occupies residues 71-91 (TSILGVLLYICLNASYTVAVF). The Cytoplasmic segment spans residues 92–173 (TDPGSPLTTG…ATCVGLYNYK (82 aa)). A DHHC domain is found at 130 to 180 (RYCKKCQCPKPDRAHHCSTCKRCVLKMDHHCPWLATCVGLYNYKAFLLFLI). The helical transmembrane segment at 174-194 (AFLLFLIYTSLFCWVDFAVSA) threads the bilayer. Residues 195 to 215 (TWIWTEVFNDAPYLETMLPVN) are Extracellular-facing. A helical transmembrane segment spans residues 216 to 236 (VVLLAILGGIIGLVLTGFTAW). Residues 237–548 (HISLAVRGMT…EDSSEWRDWD (312 aa)) are Cytoplasmic-facing. Disordered regions lie at residues 313–339 (RAEE…DQLT) and 463–548 (NPHQ…RDWD). A compositionally biased stretch (polar residues) spans 508 to 535 (DPLNQQSVPANGAVNQLQKANEASSATT). A compositionally biased stretch (basic and acidic residues) spans 536–548 (NRREDSSEWRDWD).

It belongs to the DHHC palmitoyltransferase family. PFA3 subfamily. In terms of processing, autopalmitoylated.

Its subcellular location is the vacuole membrane. It carries out the reaction L-cysteinyl-[protein] + hexadecanoyl-CoA = S-hexadecanoyl-L-cysteinyl-[protein] + CoA. Its function is as follows. Palmitoyltransferase specific for VAC8. Palmitoylates VAC8 at one or more of its N-terminal cysteine residues, which is required for its proper membrane localization. This chain is Palmitoyltransferase pfa3 (pfa3), found in Aspergillus fumigatus (strain ATCC MYA-4609 / CBS 101355 / FGSC A1100 / Af293) (Neosartorya fumigata).